A 1372-amino-acid polypeptide reads, in one-letter code: DNA-directed RNA polymerase subunit beta'' (1372 aa).

Zn(2+) contacts are provided by C252, C321, C328, and C331.

The protein belongs to the RNA polymerase beta' chain family. RpoC2 subfamily. As to quaternary structure, in plastids the minimal PEP RNA polymerase catalytic core is composed of four subunits: alpha, beta, beta', and beta''. When a (nuclear-encoded) sigma factor is associated with the core the holoenzyme is formed, which can initiate transcription. The cofactor is Zn(2+).

The protein localises to the plastid. It localises to the organellar chromatophore. The catalysed reaction is RNA(n) + a ribonucleoside 5'-triphosphate = RNA(n+1) + diphosphate. Functionally, DNA-dependent RNA polymerase catalyzes the transcription of DNA into RNA using the four ribonucleoside triphosphates as substrates. In Paulinella chromatophora, this protein is DNA-directed RNA polymerase subunit beta''.